A 212-amino-acid polypeptide reads, in one-letter code: ER lumen protein-retaining receptor 1 (212 aa).

Residues 1 to 4 (MNLF) lie on the Lumenal side of the membrane. Residues 5-24 (RFLGDLSHLLAIILLLLKIW) form a helical membrane-spanning segment. Over 25–32 (KSRSCAGI) the chain is Cytoplasmic. The chain crosses the membrane as a helical span at residues 33-52 (SGKSQVLFAVVFTARYLDLF). The interval 47 to 48 (RY) is interaction with the K-D-E-L motif on target proteins. At 53–58 (TNYISL) the chain is on the lumenal side. The helical transmembrane segment at 59 to 79 (YNTCMKVVYIACSFTTVWMIY) threads the bilayer. The Cytoplasmic portion of the chain corresponds to 80 to 92 (SKFKATYDGNHDT). A helical membrane pass occupies residues 93–110 (FRVEFLVVPTAILAFLVN). At 111-116 (HDFTPL) the chain is on the lumenal side. The helical transmembrane segment at 117–135 (EILWTFSIYLESVAILPQL) threads the bilayer. Over 136-149 (FMVSKTGEAETITS) the chain is Cytoplasmic. Residues 150 to 168 (HYLFALGVYRTLYLFNWIW) traverse the membrane as a helical segment. An interaction with the K-D-E-L motif on target proteins region spans residues 159–169 (RTLYLFNWIWR). The Lumenal portion of the chain corresponds to 169-178 (RYHFEGFFDL). The helical transmembrane segment at 179-199 (IAIVAGLVQTVLYCDFFYLYI) threads the bilayer. At 200–212 (TKVLKGKKLSLPA) the chain is on the cytoplasmic side. An important for recycling of cargo proteins with the sequence motif K-D-E-L from the Golgi to the endoplasmic reticulum region spans residues 204 to 207 (KGKK). Ser209 carries the post-translational modification Phosphoserine; by PKA.

Belongs to the ERD2 family. As to quaternary structure, upon ligand binding the receptor oligomerizes and interacts with components of the transport machinery such as ARFGAP1 and ARF1. In terms of processing, phosphorylation by PKA at Ser-209 is required for endoplasmic reticulum retention function.

The protein localises to the golgi apparatus membrane. Its subcellular location is the cytoplasmic vesicle. The protein resides in the COPI-coated vesicle membrane. It is found in the endoplasmic reticulum membrane. It localises to the endoplasmic reticulum-Golgi intermediate compartment membrane. Receptor for the C-terminal sequence motif K-D-E-L that is present on endoplasmic reticulum resident proteins and that mediates their recycling from the Golgi back to the endoplasmic reticulum. This is ER lumen protein-retaining receptor 1 (Kdelr1) from Mus musculus (Mouse).